Here is a 365-residue protein sequence, read N- to C-terminus: Outer membrane porin protein LC (365 aa).

The signal sequence occupies residues 1-23; that stretch reads MKKLTVAISAVAASVLMAMSAQA.

The protein belongs to the Gram-negative porin family. Homotrimer.

It localises to the host cell outer membrane. Its function is as follows. Forms pores that allow passive diffusion of small molecules across the host cell outer membrane. The sequence is that of Outer membrane porin protein LC (LC) from Enterobacteria phage PA-2 (Bacteriophage PA-2).